Consider the following 446-residue polypeptide: tRNA modification GTPase MnmE (446 aa).

Arg-21, Glu-77, and Lys-116 together coordinate (6S)-5-formyl-5,6,7,8-tetrahydrofolate. A TrmE-type G domain is found at 212-370 (GFRIALIGAP…LRAALASHVA (159 aa)). Asn-222 serves as a coordination point for K(+). Residues 222 to 227 (NAGKST), 241 to 247 (TDVAGTT), and 266 to 269 (DTAG) each bind GTP. Ser-226 contributes to the Mg(2+) binding site. Residues Thr-241, Val-243, and Thr-246 each contribute to the K(+) site. Residue Thr-247 coordinates Mg(2+). (6S)-5-formyl-5,6,7,8-tetrahydrofolate is bound at residue Lys-446.

It belongs to the TRAFAC class TrmE-Era-EngA-EngB-Septin-like GTPase superfamily. TrmE GTPase family. Homodimer. Heterotetramer of two MnmE and two MnmG subunits. The cofactor is K(+).

The protein resides in the cytoplasm. In terms of biological role, exhibits a very high intrinsic GTPase hydrolysis rate. Involved in the addition of a carboxymethylaminomethyl (cmnm) group at the wobble position (U34) of certain tRNAs, forming tRNA-cmnm(5)s(2)U34. The protein is tRNA modification GTPase MnmE of Caulobacter vibrioides (strain ATCC 19089 / CIP 103742 / CB 15) (Caulobacter crescentus).